Here is a 208-residue protein sequence, read N- to C-terminus: Ribonuclease HII (208 aa).

Positions 5–198 (PLIAGVDEVG…CQPRLEHDCR (194 aa)) constitute an RNase H type-2 domain. D11, E12, and D106 together coordinate a divalent metal cation.

The protein belongs to the RNase HII family. Mn(2+) serves as cofactor. The cofactor is Mg(2+).

The protein resides in the cytoplasm. It catalyses the reaction Endonucleolytic cleavage to 5'-phosphomonoester.. Endonuclease that specifically degrades the RNA of RNA-DNA hybrids. This Microcystis aeruginosa (strain NIES-843 / IAM M-2473) protein is Ribonuclease HII.